The chain runs to 258 residues: Type III pantothenate kinase (258 aa).

6-13 serves as a coordination point for ATP; sequence DVGNTNTV. Substrate-binding positions include Y100 and 107–110; that span reads GADR. Catalysis depends on D109, which acts as the Proton acceptor. D129 serves as a coordination point for K(+). ATP is bound at residue T132. T184 is a binding site for substrate.

The protein belongs to the type III pantothenate kinase family. In terms of assembly, homodimer. The cofactor is NH4(+). K(+) serves as cofactor.

It localises to the cytoplasm. The catalysed reaction is (R)-pantothenate + ATP = (R)-4'-phosphopantothenate + ADP + H(+). The protein operates within cofactor biosynthesis; coenzyme A biosynthesis; CoA from (R)-pantothenate: step 1/5. In terms of biological role, catalyzes the phosphorylation of pantothenate (Pan), the first step in CoA biosynthesis. This Bacillus licheniformis (strain ATCC 14580 / DSM 13 / JCM 2505 / CCUG 7422 / NBRC 12200 / NCIMB 9375 / NCTC 10341 / NRRL NRS-1264 / Gibson 46) protein is Type III pantothenate kinase.